Reading from the N-terminus, the 733-residue chain is 1,4-alpha-glucan branching enzyme GlgB (733 aa).

The Nucleophile role is filled by aspartate 413. The active-site Proton donor is glutamate 466.

This sequence belongs to the glycosyl hydrolase 13 family. GlgB subfamily. Monomer.

It carries out the reaction Transfers a segment of a (1-&gt;4)-alpha-D-glucan chain to a primary hydroxy group in a similar glucan chain.. It participates in glycan biosynthesis; glycogen biosynthesis. Its function is as follows. Catalyzes the formation of the alpha-1,6-glucosidic linkages in glycogen by scission of a 1,4-alpha-linked oligosaccharide from growing alpha-1,4-glucan chains and the subsequent attachment of the oligosaccharide to the alpha-1,6 position. The chain is 1,4-alpha-glucan branching enzyme GlgB from Leifsonia xyli subsp. xyli (strain CTCB07).